Reading from the N-terminus, the 236-residue chain is Purine nucleoside phosphorylase DeoD-type (236 aa).

Residue H5 participates in a purine D-ribonucleoside binding. Phosphate is bound by residues G21, R25, R44, and 88–91; that span reads RVGT. A purine D-ribonucleoside contacts are provided by residues 180–182 and 204–205; these read EME and SD. D205 serves as the catalytic Proton donor.

It belongs to the PNP/UDP phosphorylase family. As to quaternary structure, homohexamer; trimer of homodimers.

The enzyme catalyses a purine D-ribonucleoside + phosphate = a purine nucleobase + alpha-D-ribose 1-phosphate. It carries out the reaction a purine 2'-deoxy-D-ribonucleoside + phosphate = a purine nucleobase + 2-deoxy-alpha-D-ribose 1-phosphate. In terms of biological role, catalyzes the reversible phosphorolytic breakdown of the N-glycosidic bond in the beta-(deoxy)ribonucleoside molecules, with the formation of the corresponding free purine bases and pentose-1-phosphate. This Shewanella baltica (strain OS155 / ATCC BAA-1091) protein is Purine nucleoside phosphorylase DeoD-type.